A 145-amino-acid chain; its full sequence is MAARVCCQLDPARDVLCLRPVGAESRGRPVSGPFGALPSPSSSAVPADHGAHLSLRGLPVCAFSSAGPCALRFTSARRMETTVNAHQVLPKVLHKRTLGLSAMSTTDLEAYFKDCVFKDWEELGEEIRLKVFVLGGCRHNFFTSA.

The interval 68–117 is mitochondrial targeting sequence; the sequence is PCALRFTSARRMETTVNAHQVLPKVLHKRTLGLSAMSTTDLEAYFKDCVF.

The protein belongs to the orthohepadnavirus protein X family. May form homodimer. May interact with host CEBPA, CFLAR, CREB1, DDB1, E4F1, HBXIP, HSPD1/HSP60, NFKBIA, POLR2E and SMAD4. Interacts with host SMC5-SMC6 complex and induces its degradation. Interacts with host TRPC4AP; leading to prevent ubiquitination of TRPC4AP. Interacts with host PLSCR1; this interaction promotes ubiquitination and degradation of HBx and impairs HBx-mediated cell proliferation. Post-translationally, a fraction may be phosphorylated in insect cells and HepG2 cells, a human hepatoblastoma cell line. Phosphorylated in vitro by host protein kinase C or mitogen-activated protein kinase. N-acetylated in insect cells.

Its subcellular location is the host cytoplasm. The protein resides in the host nucleus. It localises to the host mitochondrion. In terms of biological role, multifunctional protein that plays a role in silencing host antiviral defenses and promoting viral transcription. Does not seem to be essential for HBV infection. May be directly involved in development of cirrhosis and liver cancer (hepatocellular carcinoma). Most of cytosolic activities involve modulation of cytosolic calcium. The effect on apoptosis is controversial depending on the cell types in which the studies have been conducted. May induce apoptosis by localizing in mitochondria and causing loss of mitochondrial membrane potential. May also modulate apoptosis by binding host CFLAR, a key regulator of the death-inducing signaling complex (DISC). Promotes viral transcription by using the host E3 ubiquitin ligase DDB1 to target the SMC5-SMC6 complex to proteasomal degradation. This host complex would otherwise bind to viral episomal DNA, and prevents its transcription. Moderately stimulates transcription of many different viral and cellular transcription elements. Promoters and enhancers stimulated by HBx contain DNA binding sites for NF-kappa-B, AP-1, AP-2, c-EBP, ATF/CREB, or the calcium-activated factor NF-AT. The protein is Protein X of Homo sapiens (Human).